The primary structure comprises 242 residues: Uridylate kinase (242 aa).

An ATP-binding site is contributed by 16–19; it reads KVSG. Glycine 58 contributes to the UMP binding site. Residues glycine 59 and arginine 63 each coordinate ATP. UMP-binding positions include aspartate 78 and 139–146; that span reads TGNPFCTT. Residues threonine 166, glutamine 167, tyrosine 172, and aspartate 175 each contribute to the ATP site.

This sequence belongs to the UMP kinase family. In terms of assembly, homohexamer.

It is found in the cytoplasm. The enzyme catalyses UMP + ATP = UDP + ADP. It functions in the pathway pyrimidine metabolism; CTP biosynthesis via de novo pathway; UDP from UMP (UMPK route): step 1/1. With respect to regulation, inhibited by UTP. Catalyzes the reversible phosphorylation of UMP to UDP. This is Uridylate kinase from Rickettsia prowazekii (strain Madrid E).